The chain runs to 645 residues: MSVINCEEVKRDEFHTEKYYESYNIFGAHVVTEDEIQGVRFTVWAPHAKAMSVVGDFNEWDYEQHKMLQVTEEGIWSLFIPHIEEGEIYKYAIETLAGDVILKADPYAVYAEVRPNTASVVFDIKGYEWNDKNWIRKKKKKSIYKEAMTVYELHFGSWKKKEDGTLYSYREMVEELIPYVVEHQFTHIEIMPLVEHPYDRSWGYQGTGYYAATSRFGTPHDLMHFVDECHKYGIGVILDWVPGHFCKDAHGLYLFDGTPTYEYKDKDVQENPVWGTVNFDLGKREVRNFLISNALFWMRYFHIDGFRVDAVANMLYWNKEGQEQSNEHAVSFLRELNEAVFAEDEDFLMTAEDSTAWPLVTTPTYEGGLGFNYKWNMGWMNDVLKYMECAPEYRKHIHEKMTFSLLYAYSENFILPLSHDEVVHGKKSLLNKMPGDYWDKFAQLRLLYGYFFTHPGKKLLFMGGEFGQFDEWKDLEDLDWNLHDFEMHRYMHDYFKELIALYKRSKPLWQLDHSPEGFQWIDANNNEQSIFSFIRQGDKQEDALVIVCNFTKATYENYKVGVPDFEYYNEILNSDAQQYGGSGQVNKKRLKTILEPYHNQAAHVEITIPPFGVSILRPVKTRKGSKKQDGSKTKVRSNVTSRGKR.

The active-site Nucleophile is D309. E352 functions as the Proton donor in the catalytic mechanism. The disordered stretch occupies residues 619–645 (VKTRKGSKKQDGSKTKVRSNVTSRGKR). The span at 636 to 645 (RSNVTSRGKR) shows a compositional bias: polar residues.

It belongs to the glycosyl hydrolase 13 family. GlgB subfamily. In terms of assembly, monomer.

It carries out the reaction Transfers a segment of a (1-&gt;4)-alpha-D-glucan chain to a primary hydroxy group in a similar glucan chain.. It participates in glycan biosynthesis; glycogen biosynthesis. Functionally, catalyzes the formation of the alpha-1,6-glucosidic linkages in glycogen by scission of a 1,4-alpha-linked oligosaccharide from growing alpha-1,4-glucan chains and the subsequent attachment of the oligosaccharide to the alpha-1,6 position. The sequence is that of 1,4-alpha-glucan branching enzyme GlgB from Bacillus cereus (strain B4264).